Here is a 123-residue protein sequence, read N- to C-terminus: Small ribosomal subunit protein uS12 (123 aa).

Residue aspartate 89 is modified to 3-methylthioaspartic acid. A disordered region spans residues 104–123; sequence TAGVKDRKQARSKYGAKRPK. Positions 113-123 are enriched in basic residues; sequence ARSKYGAKRPK.

It belongs to the universal ribosomal protein uS12 family. Part of the 30S ribosomal subunit. Contacts proteins S8 and S17. May interact with IF1 in the 30S initiation complex.

Functionally, with S4 and S5 plays an important role in translational accuracy. Interacts with and stabilizes bases of the 16S rRNA that are involved in tRNA selection in the A site and with the mRNA backbone. Located at the interface of the 30S and 50S subunits, it traverses the body of the 30S subunit contacting proteins on the other side and probably holding the rRNA structure together. The combined cluster of proteins S8, S12 and S17 appears to hold together the shoulder and platform of the 30S subunit. The polypeptide is Small ribosomal subunit protein uS12 (Chromobacterium violaceum (strain ATCC 12472 / DSM 30191 / JCM 1249 / CCUG 213 / NBRC 12614 / NCIMB 9131 / NCTC 9757 / MK)).